Consider the following 145-residue polypeptide: Halilectin 3, alpha chain (145 aa).

Asn73 carries N-linked (GlcNAc...) asparagine glycosylation.

In terms of assembly, probable heterotrimer consisting of an alpha chain and two beta chains. The alpha chain can probably have different glycosylation states. Glycosylated.

Functionally, lectin with affinity for N-acetyl-galactosamine, carragenan and glycoprotein porcine stomach mucin (PSM). Has metal-independent hemagglutinating activity towards erythrocytes from rabbit and human. Hemagglutinating activity is not inhibited by D-galactose, D-glucose, D-mannose, D-fucose, methyl-alpha-D-galactopyranoside, methyl-alpha-D-glucopyranoside, N-acetyl-glucosamine, N-acetyl-mannosamine, D-fructose, alpha-D-lactose, beta-D-lactose, D-lactulose, D-sucrose, fucoidan or glycoproteins thyroglobulin and ovalmucoid. This is Halilectin 3, alpha chain from Haliclona caerulea (Blue Caribbean sponge).